The following is a 245-amino-acid chain: Probable phosphatase YcdX (245 aa).

The Zn(2+) site is built by His7, His9, His15, His40, Glu73, His101, His131, Asp192, and His194.

The protein belongs to the PHP family. Homotrimer. Zn(2+) serves as cofactor.

This Shigella dysenteriae serotype 1 (strain Sd197) protein is Probable phosphatase YcdX.